The following is a 147-amino-acid chain: Putative pre-16S rRNA nuclease (147 aa).

It belongs to the YqgF nuclease family.

The protein localises to the cytoplasm. Its function is as follows. Could be a nuclease involved in processing of the 5'-end of pre-16S rRNA. The protein is Putative pre-16S rRNA nuclease of Ligilactobacillus salivarius (strain UCC118) (Lactobacillus salivarius).